The chain runs to 140 residues: VapC ribonuclease Y4jK (140 aa).

Residues 2-135 (IVLDTNVISE…FEAAGLDIIN (134 aa)) form the PINc domain. Residues Asp5 and Asp104 each coordinate Mg(2+).

Belongs to the PINc/VapC protein family. Mg(2+) is required as a cofactor.

Functionally, toxic component of a type II toxin-antitoxin (TA) system. An RNase. Involved in plasmid stability. In Sinorhizobium fredii (strain NBRC 101917 / NGR234), this protein is VapC ribonuclease Y4jK.